Consider the following 122-residue polypeptide: Large ribosomal subunit protein uL14 (122 aa).

It belongs to the universal ribosomal protein uL14 family. As to quaternary structure, part of the 50S ribosomal subunit. Forms a cluster with proteins L3 and L19. In the 70S ribosome, L14 and L19 interact and together make contacts with the 16S rRNA in bridges B5 and B8.

In terms of biological role, binds to 23S rRNA. Forms part of two intersubunit bridges in the 70S ribosome. This chain is Large ribosomal subunit protein uL14, found in Baumannia cicadellinicola subsp. Homalodisca coagulata.